The sequence spans 726 residues: Catalase-peroxidase (726 aa).

The segment at 1 to 33 is disordered; that stretch reads MSTSDDIHNTTATGKCPFHQGGHDQSAGAGTTT. Residues 105–226 constitute a cross-link (tryptophyl-tyrosyl-methioninium (Trp-Tyr) (with M-252)); it reads WHGAGTYRSI…LGATEMGLIY (122 aa). H106 (proton acceptor) is an active-site residue. A cross-link (tryptophyl-tyrosyl-methioninium (Tyr-Met) (with W-105)) is located at residues 226 to 252; sequence YVNPEGPDHSGEPLSAAAAIRATFGNM. H267 contacts heme b.

This sequence belongs to the peroxidase family. Peroxidase/catalase subfamily. In terms of assembly, homodimer or homotetramer. Heme b is required as a cofactor. In terms of processing, formation of the three residue Trp-Tyr-Met cross-link is important for the catalase, but not the peroxidase activity of the enzyme.

The catalysed reaction is H2O2 + AH2 = A + 2 H2O. It catalyses the reaction 2 H2O2 = O2 + 2 H2O. Bifunctional enzyme with both catalase and broad-spectrum peroxidase activity. In Shigella boydii serotype 4 (strain Sb227), this protein is Catalase-peroxidase.